A 201-amino-acid chain; its full sequence is Two-component response regulator ORR9 (201 aa).

Positions 10–142 constitute a Response regulatory domain; that stretch reads HVLAVDDSLP…DMSKLKPHIL (133 aa). Position 75 is a 4-aspartylphosphate (Asp75). Residues 149 to 201 are disordered; it reads HYQQEQNLQSNSESNNSSNPTSENSSSSTSSNSHKRKAVDEEILPHTIRPRHS. A compositionally biased stretch (low complexity) spans 158-180; sequence SNSESNNSSNPTSENSSSSTSSN.

The protein belongs to the ARR family. Type-A subfamily. Post-translationally, two-component system major event consists of a His-to-Asp phosphorelay between a sensor histidine kinase (HK) and a response regulator (RR). In plants, the His-to-Asp phosphorelay involves an additional intermediate named Histidine-containing phosphotransfer protein (HPt). This multistep phosphorelay consists of a His-Asp-His-Asp sequential transfer of a phosphate group between first a His and an Asp of the HK protein, followed by the transfer to a conserved His of the HPt protein and finally the transfer to an Asp in the receiver domain of the RR protein.

Its function is as follows. Functions as a response regulator involved in His-to-Asp phosphorelay signal transduction system. Phosphorylation of the Asp residue in the receiver domain activates the ability of the protein to promote the transcription of target genes. Type-A response regulators seem to act as negative regulators of the cytokinin signaling. The polypeptide is Two-component response regulator ORR9 (Oryza sativa subsp. japonica (Rice)).